We begin with the raw amino-acid sequence, 118 residues long: Mu-like prophage FluMu tail tube protein (118 aa).

The disordered stretch occupies residues R12–E32.

To phage Mu protein M.

This chain is Mu-like prophage FluMu tail tube protein, found in Haemophilus influenzae (strain ATCC 51907 / DSM 11121 / KW20 / Rd).